Reading from the N-terminus, the 296-residue chain is MQDRFIRSITQLPTPLADALIPLLHQNFAGHIDAQQLAELVQSSKMTEAEVLLALLPIAAALAKPPISEFYVGAIAKGKSGDIYMGANLELPGEALFHSVHAEQSAISHAWLSGESQIVDMIVNASPCGHCRQFMNELVEGGQIKIHLPSQDSHLLSYYLPYAFGPKDLNVQSPLLVKHETEFALDSSDPMVIEALDHAGLSYAPYTQSYAAVVLETSDGATYCGRYAENAAFNPSMLPMQMALSNLTRHNRDFGEIRRAVLVESSQGKISLVGATMDALHAVAAIELEHIVVDPV.

CMP/dCMP-type deaminase domains are found at residues 47–167 (TEAE…FGPK) and 186–296 (DSSD…VDPV). Position 88–90 (88–90 (NLE)) interacts with substrate. Zn(2+) is bound at residue His101. Glu103 (proton donor) is an active-site residue. Zn(2+)-binding residues include Cys128 and Cys131.

Belongs to the cytidine and deoxycytidylate deaminase family. In terms of assembly, homodimer. It depends on Zn(2+) as a cofactor.

It catalyses the reaction cytidine + H2O + H(+) = uridine + NH4(+). It carries out the reaction 2'-deoxycytidine + H2O + H(+) = 2'-deoxyuridine + NH4(+). This enzyme scavenges exogenous and endogenous cytidine and 2'-deoxycytidine for UMP synthesis. The sequence is that of Cytidine deaminase from Shewanella sp. (strain MR-4).